A 572-amino-acid chain; its full sequence is Arginine--tRNA ligase (572 aa).

A 'HIGH' region motif is present at residues 122–132; the sequence is PNLAKEMHVGH.

It belongs to the class-I aminoacyl-tRNA synthetase family. As to quaternary structure, monomer.

It is found in the cytoplasm. It carries out the reaction tRNA(Arg) + L-arginine + ATP = L-arginyl-tRNA(Arg) + AMP + diphosphate. The protein is Arginine--tRNA ligase of Neisseria meningitidis serogroup C / serotype 2a (strain ATCC 700532 / DSM 15464 / FAM18).